We begin with the raw amino-acid sequence, 88 residues long: Phosphocarrier protein HPr (88 aa).

The HPr domain occupies 1-88; that stretch reads MVVKTVRVLN…RLFQNKFEEE (88 aa). The active-site Pros-phosphohistidine intermediate is histidine 15. At serine 46 the chain carries Phosphoserine; by HPrK/P.

Belongs to the HPr family.

The protein resides in the cytoplasm. With respect to regulation, phosphorylation on Ser-46 inhibits the phosphoryl transfer from enzyme I to HPr. Functionally, general (non sugar-specific) component of the phosphoenolpyruvate-dependent sugar phosphotransferase system (sugar PTS). This major carbohydrate active-transport system catalyzes the phosphorylation of incoming sugar substrates concomitantly with their translocation across the cell membrane. The phosphoryl group from phosphoenolpyruvate (PEP) is transferred to the phosphoryl carrier protein HPr by enzyme I. Phospho-HPr then transfers it to the PTS EIIA domain. This is Phosphocarrier protein HPr (ptsH) from Treponema pallidum (strain Nichols).